The chain runs to 264 residues: Thymidylate synthase (264 aa).

Arginine 21 provides a ligand contact to dUMP. Histidine 51 contributes to the (6R)-5,10-methylene-5,6,7,8-tetrahydrofolate binding site. Residue 126–127 (RR) participates in dUMP binding. Cysteine 146 (nucleophile) is an active-site residue. DUMP-binding positions include 166–169 (RSAD), asparagine 177, and 207–209 (HLY). Aspartate 169 contributes to the (6R)-5,10-methylene-5,6,7,8-tetrahydrofolate binding site. Serine 263 contributes to the (6R)-5,10-methylene-5,6,7,8-tetrahydrofolate binding site.

The protein belongs to the thymidylate synthase family. Bacterial-type ThyA subfamily. As to quaternary structure, homodimer.

It is found in the cytoplasm. The enzyme catalyses dUMP + (6R)-5,10-methylene-5,6,7,8-tetrahydrofolate = 7,8-dihydrofolate + dTMP. The protein operates within pyrimidine metabolism; dTTP biosynthesis. Functionally, catalyzes the reductive methylation of 2'-deoxyuridine-5'-monophosphate (dUMP) to 2'-deoxythymidine-5'-monophosphate (dTMP) while utilizing 5,10-methylenetetrahydrofolate (mTHF) as the methyl donor and reductant in the reaction, yielding dihydrofolate (DHF) as a by-product. This enzymatic reaction provides an intracellular de novo source of dTMP, an essential precursor for DNA biosynthesis. The sequence is that of Thymidylate synthase from Neisseria gonorrhoeae (strain ATCC 700825 / FA 1090).